We begin with the raw amino-acid sequence, 258 residues long: Phosphate import ATP-binding protein PstB 2 (258 aa).

The ABC transporter domain maps to 12-253 (IQVRDLNFYY…PRQKQTEDYI (242 aa)). Position 44–51 (44–51 (GPSGCGKS)) interacts with ATP.

It belongs to the ABC transporter superfamily. Phosphate importer (TC 3.A.1.7) family. The complex is composed of two ATP-binding proteins (PstB), two transmembrane proteins (PstC and PstA) and a solute-binding protein (PstS).

The protein resides in the cell inner membrane. The enzyme catalyses phosphate(out) + ATP + H2O = ADP + 2 phosphate(in) + H(+). Part of the ABC transporter complex PstSACB involved in phosphate import. Responsible for energy coupling to the transport system. This Pectobacterium atrosepticum (strain SCRI 1043 / ATCC BAA-672) (Erwinia carotovora subsp. atroseptica) protein is Phosphate import ATP-binding protein PstB 2.